The chain runs to 677 residues: Protein asunder (677 aa).

Positions 515–540 (RLKLSKAKDQYRLLYRELEQLIQLNS) form a coiled coil. Positions 578–598 (ESPLSPERLEPTSSSSSNSLL) are enriched in low complexity. Positions 578–604 (ESPLSPERLEPTSSSSSNSLLKARKRR) are disordered. A Nuclear localization signal (NLS) motif is present at residues 598–604 (LKARKRR).

It belongs to the Integrator subunit 13 family. Belongs to the multiprotein complex Integrator, at least composed of IntS1, IntS2, IntS3, IntS4, omd/IntS5, IntS6, defl/IntS7, IntS8, IntS9, IntS10, IntS11, IntS12, asun/IntS13, IntS14 and IntS15. The core complex associates with protein phosphatase 2A subunits mts/PP2A and Pp2A-29B, to form the Integrator-PP2A (INTAC) complex. Post-translationally, phosphorylated.

The protein localises to the nucleus. Its subcellular location is the cytoplasm. The protein resides in the perinuclear region. Component of the integrator complex, a multiprotein complex that terminates RNA polymerase II (Pol II) transcription in the promoter-proximal region of genes. The integrator complex provides a quality checkpoint during transcription elongation by driving premature transcription termination of transcripts that are unfavorably configured for transcriptional elongation: the complex terminates transcription by (1) catalyzing dephosphorylation of the C-terminal domain (CTD) of Pol II subunit Polr2A/Rbp1 and Spt5, and (2) degrading the exiting nascent RNA transcript via endonuclease activity. The integrator complex is also involved in the 3'-end processing of the U7 snRNA, and also the spliceosomal snRNAs U1, U2, U4 and U5. The sequence is that of Protein asunder (asun) from Drosophila willistoni (Fruit fly).